We begin with the raw amino-acid sequence, 291 residues long: MPSLKDLKNRISSVKNTRKITKAMQMVAAAKLRRAQEAAEDARPYAERFNAVMAGLAASVGQSDTAPKLLAGTGSDQVQLLVVMTAERGLCGGFNANIAKLARQKVLDLQAAGKTVKILTVGKKGRDVLKREFGDLFVGHVDLTEVKRVGYVDAQGIAKDILARFDAGEFDVATIFYSKFQNVVTQIPTAQQIIPAEFDAEGAEATSGVVDYEPSEEAILADLLPRGVATQIFAGLLENGASEQGARMSAMDNATRNAGEMIDKLTIEYNRSRQAVITNELIEIISGAEAL.

Belongs to the ATPase gamma chain family. F-type ATPases have 2 components, CF(1) - the catalytic core - and CF(0) - the membrane proton channel. CF(1) has five subunits: alpha(3), beta(3), gamma(1), delta(1), epsilon(1). CF(0) has three main subunits: a, b and c.

The protein localises to the cell inner membrane. In terms of biological role, produces ATP from ADP in the presence of a proton gradient across the membrane. The gamma chain is believed to be important in regulating ATPase activity and the flow of protons through the CF(0) complex. This chain is ATP synthase gamma chain, found in Ruegeria sp. (strain TM1040) (Silicibacter sp.).